We begin with the raw amino-acid sequence, 358 residues long: tRNA N6-adenosine threonylcarbamoyltransferase (358 aa).

The Fe cation site is built by His118 and His122. Substrate is bound by residues 143–147, Asp176, Gly189, and Asn298; that span reads IVSGG. A Fe cation-binding site is contributed by Asp326.

It belongs to the KAE1 / TsaD family. Fe(2+) serves as cofactor.

The protein resides in the cytoplasm. The catalysed reaction is L-threonylcarbamoyladenylate + adenosine(37) in tRNA = N(6)-L-threonylcarbamoyladenosine(37) in tRNA + AMP + H(+). Functionally, required for the formation of a threonylcarbamoyl group on adenosine at position 37 (t(6)A37) in tRNAs that read codons beginning with adenine. Is involved in the transfer of the threonylcarbamoyl moiety of threonylcarbamoyl-AMP (TC-AMP) to the N6 group of A37, together with TsaE and TsaB. TsaD likely plays a direct catalytic role in this reaction. The sequence is that of tRNA N6-adenosine threonylcarbamoyltransferase from Rhodopirellula baltica (strain DSM 10527 / NCIMB 13988 / SH1).